A 141-amino-acid polypeptide reads, in one-letter code: Large ribosomal subunit protein uL11 (141 aa).

It belongs to the universal ribosomal protein uL11 family. As to quaternary structure, part of the ribosomal stalk of the 50S ribosomal subunit. Interacts with L10 and the large rRNA to form the base of the stalk. L10 forms an elongated spine to which L12 dimers bind in a sequential fashion forming a multimeric L10(L12)X complex. One or more lysine residues are methylated.

Its function is as follows. Forms part of the ribosomal stalk which helps the ribosome interact with GTP-bound translation factors. The sequence is that of Large ribosomal subunit protein uL11 from Clostridioides difficile (strain 630) (Peptoclostridium difficile).